A 677-amino-acid polypeptide reads, in one-letter code: WD repeat-containing protein 48 (677 aa).

WD repeat units lie at residues 28–67 (YNRN…QDPY), 73–112 (HHTD…CMST), 115–154 (THKD…ALTA), 166–205 (GNKD…KLMK), 208–247 (GHTD…CIAT), 250–289 (VHDE…MRVL), 292–334 (EEKA…NFRA), and 358–397 (KGGT…KGED). The disordered stretch occupies residues 611–632 (SQATSSSANDKPGEQEKEEDVS).

It belongs to the WD repeat WDR48 family.

It is found in the nucleus. The protein resides in the cytoplasm. Its subcellular location is the lysosome. It localises to the late endosome. Its function is as follows. Regulator of deubiquitinating complexes, which acts as a strong activator of usp1, usp12 and usp46. Enhances the usp1-mediated deubiquitination of fancd2; usp1 being almost inactive by itself. Activates deubiquitination by increasing the catalytic turnover without increasing the affinity of deubiquitinating enzymes for the substrate. Also activates deubiquitinating activity of complexes containing usp12. Together with rad51ap1, promotes DNA repair by stimulating rad51-mediated homologous recombination. Binds single-stranded DNA (ssDNA) and double-stranded DNA (dsDNA). DNA-binding is required both for usp1-mediated deubiquitination of fancd2 and stimulation of rad51-mediated homologous recombination: both wdr48/uaf1 and rad51ap1 have coordinated role in DNA-binding during these processes. Together with atad5 and by regulating usp1 activity, has a role in pcna-mediated translesion synthesis (TLS) by deubiquitinating monoubiquitinated pcna. Together with atad5, has a role in recruiting rad51 to stalled forks during replication stress. This chain is WD repeat-containing protein 48 (wdr48), found in Danio rerio (Zebrafish).